Reading from the N-terminus, the 251-residue chain is MWIGVISLFPEMFRAITDFGVTGRAVKNGLLNVQYWSPRDFTYDRHRTVDDRPYGGGPGMLMMVQPLRDAIHAAKAAAGEGARVIYLSPQGRKLDQQGVRQLATNQKMILVCGRYEGIDERVIKTEIDEEWSIGDYVLSGGELPAMTLIDSVARFIPGVLGHQASAEEDSFADGLLDCPHFTRPEILESMDVPAVLLSGNHAEIRRWRLKQSLGRTWLRRPELLKSLALTDEQTRLLAEFQREYQSEQQEY.

S-adenosyl-L-methionine contacts are provided by residues Gly-113 and 133–138; that span reads IGDYVL.

Belongs to the RNA methyltransferase TrmD family. In terms of assembly, homodimer.

The protein localises to the cytoplasm. The catalysed reaction is guanosine(37) in tRNA + S-adenosyl-L-methionine = N(1)-methylguanosine(37) in tRNA + S-adenosyl-L-homocysteine + H(+). Its function is as follows. Specifically methylates guanosine-37 in various tRNAs. The chain is tRNA (guanine-N(1)-)-methyltransferase from Pectobacterium atrosepticum (strain SCRI 1043 / ATCC BAA-672) (Erwinia carotovora subsp. atroseptica).